A 199-amino-acid chain; its full sequence is Recombination protein RecR (199 aa).

The segment at cysteine 57–cysteine 72 adopts a C4-type zinc-finger fold. The Toprim domain occupies serine 81–proline 176.

This sequence belongs to the RecR family.

In terms of biological role, may play a role in DNA repair. It seems to be involved in an RecBC-independent recombinational process of DNA repair. It may act with RecF and RecO. The protein is Recombination protein RecR of Shewanella putrefaciens (strain CN-32 / ATCC BAA-453).